Consider the following 293-residue polypeptide: tRNA pseudouridine synthase B (293 aa).

The Nucleophile role is filled by aspartate 39.

Belongs to the pseudouridine synthase TruB family. Type 1 subfamily.

It catalyses the reaction uridine(55) in tRNA = pseudouridine(55) in tRNA. Its function is as follows. Responsible for synthesis of pseudouridine from uracil-55 in the psi GC loop of transfer RNAs. The protein is tRNA pseudouridine synthase B of Rickettsia bellii (strain RML369-C).